The following is a 282-amino-acid chain: Chlorite dismutase (282 aa).

A signal peptide spans 1–31 (MTNLSIHNFKLSLVAAVIGSAMVMTSSPVAA). Position 104 (E104) interacts with Ca(2+). H204 is a heme binding site. Residue R217 is the Proton acceptor of the active site. The Ca(2+) site is built by D226 and T265.

It belongs to the chlorite dismutase family. Homopentamer. Requires heme b as cofactor.

It is found in the periplasm. The catalysed reaction is chloride + O2 = chlorite. Catalyzes the heme-dependent decomposition of chlorite to O(2) and chloride with high efficiency and specificity. Used to detoxify chlorite, a by-product of the reduction of perchlorate, a primarily anthropogenic pollutant, in perchlorate-respiring bacteria. This is Chlorite dismutase from Dechloromonas aromatica (strain RCB).